A 403-amino-acid chain; its full sequence is L-cysteine:1D-myo-inositol 2-amino-2-deoxy-alpha-D-glucopyranoside ligase (403 aa).

Cys43 lines the Zn(2+) pocket. Residues 43–46, Thr58, 81–83, and Trp223 contribute to the L-cysteinyl-5'-AMP site; these read CGIT and NVT. A 'HIGH' region motif is present at residues 45 to 55; that stretch reads ITPYDATHLGH. Cys227 contributes to the Zn(2+) binding site. 245-247 is a binding site for L-cysteinyl-5'-AMP; sequence GAD. His252 lines the Zn(2+) pocket. Val278 lines the L-cysteinyl-5'-AMP pocket. The short motif at 284 to 288 is the 'KMSKS' region element; the sequence is KMSKS.

This sequence belongs to the class-I aminoacyl-tRNA synthetase family. MshC subfamily. Monomer. Requires Zn(2+) as cofactor.

The catalysed reaction is 1D-myo-inositol 2-amino-2-deoxy-alpha-D-glucopyranoside + L-cysteine + ATP = 1D-myo-inositol 2-(L-cysteinylamino)-2-deoxy-alpha-D-glucopyranoside + AMP + diphosphate + H(+). Functionally, catalyzes the ATP-dependent condensation of GlcN-Ins and L-cysteine to form L-Cys-GlcN-Ins. The sequence is that of L-cysteine:1D-myo-inositol 2-amino-2-deoxy-alpha-D-glucopyranoside ligase from Acidothermus cellulolyticus (strain ATCC 43068 / DSM 8971 / 11B).